Consider the following 91-residue polypeptide: Small ribosomal subunit protein bS20 (91 aa).

The interval 1–28 is disordered; the sequence is MPNIKSAIKRTKTIEKRRAHRASQKSDL. Positions 7 to 23 are enriched in basic residues; that stretch reads AIKRTKTIEKRRAHRAS.

This sequence belongs to the bacterial ribosomal protein bS20 family.

Functionally, binds directly to 16S ribosomal RNA. In Brevibacillus brevis (strain 47 / JCM 6285 / NBRC 100599), this protein is Small ribosomal subunit protein bS20.